An 895-amino-acid polypeptide reads, in one-letter code: Androgen receptor (895 aa).

The interval 1–533 (MEVQLGLGRV…PIDYYFPPQK (533 aa)) is modulating. The segment at 1 to 562 (MEVQLGLGRV…GSCKVFFKRA (562 aa)) is interaction with ZNF318. Disordered stretches follow at residues 33–150 (VIQN…LSLL) and 178–211 (QQQQ…YLEG). Composition is skewed to low complexity over residues 44 to 81 (AASA…GSPQ) and 178 to 200 (QQQQ…ASGA). The residue at position 65 (Ser65) is a Phosphoserine; by CDK9. Phosphoserine is present on Ser79. The segment covering 201-211 (PTSSKDNYLEG) has biased composition (polar residues). At Tyr208 the chain carries Phosphotyrosine; by CSK. The residue at position 241 (Ser241) is a Phosphoserine. Tyr252 carries the phosphotyrosine; by CSK and TNK2 modification. Phosphotyrosine; by CSK is present on residues Tyr292, Tyr331, Tyr342, and Tyr347. Residue Tyr348 is modified to Phosphotyrosine; by CSK and TNK2. Residue Lys371 forms a Glycyl lysine isopeptide (Lys-Gly) (interchain with G-Cter in SUMO) linkage. Tyr378 is modified (phosphotyrosine; by CSK). A Glycyl lysine isopeptide (Lys-Gly) (interchain with G-Cter in SUMO) cross-link involves residue Lys496. Phosphotyrosine; by CSK is present on residues Tyr510 and Tyr527. The interaction with LPXN stretch occupies residues 527-894 (YYFPPQKTCL…GKVKPIYFHT (368 aa)). The nuclear receptor DNA-binding region spans 534–607 (TCLICGDEAS…AGMTLGARKL (74 aa)). NR C4-type zinc fingers lie at residues 535–555 (CLIC…CGSC) and 571–595 (CASR…LRKC). The interval 547 to 637 (YGALTCGSCK…TEETAQKLTV (91 aa)) is interaction with HIPK3. The interaction with CCAR1 stretch occupies residues 567–894 (QKYLCASRND…GKVKPIYFHT (328 aa)). The tract at residues 600–894 (MTLGARKLKK…GKVKPIYFHT (295 aa)) is interaction with KAT7. Phosphoserine; by STK4/MST1 is present on Ser626. An NR LBD domain is found at 644–875 (ECQPIFLNVL…DFPEMMAEII (232 aa)). Positions 681 and 728 each coordinate 17beta-hydroxy-5alpha-androstan-3-one. Glycyl lysine isopeptide (Lys-Gly) (interchain with G-Cter in ubiquitin) cross-links involve residues Lys821 and Lys823. Thr853 lines the 17beta-hydroxy-5alpha-androstan-3-one pocket. Tyr891 carries the post-translational modification Phosphotyrosine; by CSK.

This sequence belongs to the nuclear hormone receptor family. NR3 subfamily. In terms of assembly, binds DNA as a homodimer. Part of a ternary complex containing AR, EFCAB6/DJBP and PARK7. Interacts with HIPK3 and NR0B2 in the presence of androgen. The ligand binding domain interacts with KAT7/HBO1 in the presence of dihydrotestosterone. Interacts with EFCAB6/DJBP, PQBP1, RANBP9, RBAK, SPDEF, SRA1, TGFB1I1 and RREB1. Interacts with ZMIZ1/ZIMP10 and ZMIZ2/ZMIP7 which both enhance its transactivation activity. Interacts with SLC30A9 and RAD54L2/ARIP4. Interacts with MACROD1 (via macro domain). Interacts via the ligand-binding domain with LXXLL and FXXLF motifs from NCOA1, NCOA2, NCOA3 and MAGEA11. Interacts (via nuclear receptor DNA binding domain and nuclear receptor ligand binding domain) with NCOA4. The AR N-terminal poly-Gln region binds Ran resulting in enhancement of AR-mediated transactivation. Ran-binding decreases as the poly-Gln length increases. Interacts with HIP1 (via coiled coil domain). Interacts (via ligand-binding domain) with TRIM68. Interacts with TNK2. Interacts with USP26. Interacts with RNF6. Interacts (regulated by RNF6 probably through polyubiquitination) with RNF14; regulates AR transcriptional activity. Interacts with PRMT2 and TRIM24. Interacts with RACK1. Interacts with RANBP10; this interaction enhances dihydrotestosterone-induced AR transcriptional activity. Interacts with PRPF6 in a hormone-independent way; this interaction enhances dihydrotestosterone-induced AR transcriptional activity. Interacts with STK4/MST1. Interacts with ZIPK/DAPK3. Interacts with LPXN. Interacts with MAK. Part of a complex containing AR, MAK and NCOA3. Interacts with CRY1. Interacts with CCAR1 and GATA2. Interacts with ZNF318. Interacts with BUD31. Interacts with ARID4A. Interacts with ARID4B. Interacts (via NR LBD domain) with ZBTB7A; the interaction is direct and androgen-dependent. Interacts with NCOR1. Interacts with NCOR2. Interacts with CRY2 in a ligand-dependent manner. Phosphorylated in prostate cancer cells in response to several growth factors including EGF. Phosphorylation is induced by c-Src kinase (CSK). Tyr-510 is one of the major phosphorylation sites and an increase in phosphorylation and Src kinase activity is associated with prostate cancer progression. Phosphorylation by TNK2 enhances the DNA-binding and transcriptional activity. Phosphorylation at Ser-65 by CDK9 regulates AR promoter selectivity and cell growth. In terms of processing, sumoylated on Lys-371 (major) and Lys-496. Ubiquitinated. Deubiquitinated by USP26. 'Lys-6' and 'Lys-27'-linked polyubiquitination by RNF6 modulates AR transcriptional activity and specificity. Post-translationally, palmitoylated by ZDHHC7 and ZDHHC21. Palmitoylation is required for plasma membrane targeting and for rapid intracellular signaling via ERK and AKT kinases and cAMP generation.

Its subcellular location is the nucleus. The protein localises to the cytoplasm. In terms of biological role, steroid hormone receptors are ligand-activated transcription factors that regulate eukaryotic gene expression and affect cellular proliferation and differentiation in target tissues. Transcription factor activity is modulated by bound coactivator and corepressor proteins like ZBTB7A that recruits NCOR1 and NCOR2 to the androgen response elements/ARE on target genes, negatively regulating androgen receptor signaling and androgen-induced cell proliferation. Transcription activation is also down-regulated by NR0B2. Activated, but not phosphorylated, by HIPK3 and ZIPK/DAPK3. In Macaca mulatta (Rhesus macaque), this protein is Androgen receptor (AR).